The primary structure comprises 266 residues: Ras-like protein family member 12 (266 aa).

Residues 27–34 (GRRGAGKS), 74–78 (DTADL), and 134–137 (NKLD) contribute to the GTP site.

Belongs to the small GTPase superfamily. Ras family.

The enzyme catalyses GTP + H2O = GDP + phosphate + H(+). This Bos taurus (Bovine) protein is Ras-like protein family member 12 (RASL12).